Here is a 204-residue protein sequence, read N- to C-terminus: Large ribosomal subunit protein uL4 (204 aa).

The tract at residues 49–75 (TKGRSEVSGGGKKPWRQKGRGGARAGS) is disordered.

Belongs to the universal ribosomal protein uL4 family. Part of the 50S ribosomal subunit.

One of the primary rRNA binding proteins, this protein initially binds near the 5'-end of the 23S rRNA. It is important during the early stages of 50S assembly. It makes multiple contacts with different domains of the 23S rRNA in the assembled 50S subunit and ribosome. Functionally, forms part of the polypeptide exit tunnel. This Campylobacter hominis (strain ATCC BAA-381 / DSM 21671 / CCUG 45161 / LMG 19568 / NCTC 13146 / CH001A) protein is Large ribosomal subunit protein uL4.